Reading from the N-terminus, the 89-residue chain is Protein S100-A6 (89 aa).

EF-hand domains follow at residues 12–47 and 48–83; these read LVAIFHKYSGKEGDKHTLSKKELKELIQKELTIGSK and LQDAEIARLMDDLDRNKDQEVNFQEYVAFLGALALI. Thr28 and Glu33 together coordinate Ca(2+). Lys40 bears the N6-acetyllysine mark. Ser46 is modified (phosphoserine). Lys47 carries the post-translational modification N6-acetyllysine; alternate. Lys47 is modified (N6-succinyllysine; alternate). Residues Asp61, Asn63, Asp65, Glu67, and Glu72 each contribute to the Ca(2+) site.

It belongs to the S-100 family. Homodimer; head to tail assembly of 2 subunits. Interacts with CACYBP in a calcium-dependent manner. Interacts with ANXA2 and ANXA11 (via N-terminus). Interacts with SUGT1. Interacts with TP53; has higher affinity for TP53 that is phosphorylated on its N-terminal domain, and lower affinity for TP53 that is phosphorylated on its C-terminal domain. Interacts with tropomyosin. Interacts with FKBP4. Interacts with PPP5C (via TPR repeats); the interaction is calcium-dependent and modulates PPP5C activity. Interacts with TPPP; this interaction inhibits TPPP dimerization.

It localises to the nucleus envelope. The protein resides in the cytoplasm. Its subcellular location is the cell membrane. Its function is as follows. May function as calcium sensor and modulator, contributing to cellular calcium signaling. May function by interacting with other proteins, such as TPR-containing proteins, and indirectly play a role in many physiological processes such as the reorganization of the actin cytoskeleton and in cell motility. Binds 2 calcium ions. Calcium binding is cooperative. The protein is Protein S100-A6 (S100a6) of Mus musculus (Mouse).